The sequence spans 1387 residues: MPPGTKGDPSNVTQPLPCLPSAEEDAIKVFVRIRPPVEGTLTGVDGEQGSCLTALSSTTIRLHSKPEPKMFTFDHVANVDTTQESVFSSVAKNIVESCMNGYNGTIFAYGQTGSGKTFTMLGPSESDNFTHNLRGVIPRSFEYLFFLINREKEKAGDGKSFLCKCSFIEIYNEQIFDLLDSASAGLFLREHIKKGVFVVGAVEQVVTSAAEAYQVLSMGWRNRRVASTSMNRESSRSHAVFTVTIESMEKTNDIVNIRSSQLNLVDLAGSERQKDTQTEGVRLKEAGSINRSLSCLGQVITALVDVANGRQRHICYRDSKLTFLLRDSLGGNAKTFIIANVHPGSKCFGETLSTLQFAQRAKLIKNKAVVNEDTQGNVSQLQAEVKKLKEQLSQLLSGQMPGDISVARAPSVGDNMDYMNTFIEAMMLLERSDSEKKALLQKVIQLEDLCNKKEKFIQSNKMIVKFREDHIVRLEKAHREGQISLSNNEQDNFIAELKEEIRTLKEQVEHHPRVAKYALENHSLREENKRIGSLQSVKRAQEVSAQMMAELEKAFLEASVSEKDRQVAPMHSTPIQLDNSSLMSAARMRERMLQLESELATSKQEYEEFKELTKKKQVEQESELQSLMKSNQHLENILDAIKENKRHEVSQLNRMHAETIKNMTTPTKAYNLRSRLVPRLSLDGISNGLTDTPKSGDVMDDIINEPIPPEMSEQAYEAIAEELRIVQEQVTALQVKLDEEESKNIKLEQQVNKLELCSTQIQELFNSERSNWNKEQQAFIAQIKSLEKQQQDNKNQEDVLKSEVHDLRVVLQSADRELSAVKGEYSLFREKQEKELSQLSARHMAVQLQLDNFRLEHETLLEEKRSLQDAFDNLEEVMKFETDQLKQELSDSKHENETLRAELSNLLELLETEKERRQKLTSQLEEDKESKTKELLQVVDENMHLRKQCSELVTKCEHQVTELQRLEHSLTSSKEMIADLEKKNTADKEVVVDLMNQIQVHRTTIIHKTESIDLLTRELEDINSKYSIVLLAKEECKTVNEEQEKQIEELRESLERKQSADNIEKELLCDDLAHATEELGKLTEAFNKQETMLHACEKELVEKEQLISELTNKVKLMTDLEITKTEQEKIKPSHSNSNSPVVLAQTPRTPVGNPYESEFANLQNRNTNLAVLISELNEERTLKNEEIIKLKMQLCETENMHLEIQNLQGICKELKSQLENCKKGMKDGNEQKPSDMQDLKREIEKEVSERMEKGKATEHILKLQAELEETRNLLCAKDHSLNELNNEMERTRSLEAKAFTEKEQIRSVLEAKYEETEKLSQELDMLRKQVSFLAEENGKILGHQNPNQKIQYLVKLKKENDKLLEEAEKLRIENLFLKETKKCEHCD.

In terms of domain architecture, Kinesin motor spans 26 to 364 (AIKVFVRIRP…LQFAQRAKLI (339 aa)). ATP is bound at residue 110–117 (GQTGSGKT). Residues 369 to 1383 (VVNEDTQGNV…NLFLKETKKC (1015 aa)) are a coiled coil. Residues 1138 to 1387 (NSPVVLAQTP…KETKKCEHCD (250 aa)) are necessary for its targeting to microtubule minus ends.

It belongs to the TRAFAC class myosin-kinesin ATPase superfamily. Kinesin family. KLP2 subfamily. Homodimer. Dimerization is required for targeting to microtubule minus ends. Found in a complex with tpx2 and microtubules. Its association with microtubules and targeting to microtubule minus ends requires tpx2. Strongly expressed in testis and weakly in lung (at protein level).

The protein localises to the cytoplasm. It localises to the cytoskeleton. Its subcellular location is the microtubule organizing center. It is found in the centrosome. The protein resides in the spindle. The protein localises to the spindle pole. Plus-end directed kinesin-like motor enzyme involved in mitotic spindle assembly. Required for centrosome separation and maintenance of spindle bipolarity during mitosis. The sequence is that of Kinesin-like protein KIF15-B (kif15-b) from Xenopus laevis (African clawed frog).